The chain runs to 266 residues: Exosome complex component Rrp42 (266 aa).

The protein belongs to the RNase PH family. Rrp42 subfamily. In terms of assembly, component of the archaeal exosome complex. Forms a hexameric ring-like arrangement composed of 3 Rrp41-Rrp42 heterodimers. The hexameric ring associates with a trimer of Rrp4 and/or Csl4 subunits.

The protein localises to the cytoplasm. In terms of biological role, non-catalytic component of the exosome, which is a complex involved in RNA degradation. Contributes to the structuring of the Rrp41 active site. This chain is Exosome complex component Rrp42, found in Methanosarcina acetivorans (strain ATCC 35395 / DSM 2834 / JCM 12185 / C2A).